The primary structure comprises 214 residues: MSGLFITFEGGEGAGKSTQIALLASHLRNHGFDPVITREPGGSPGAEAIRHVILSGNAETYGPAMEALLFAAARADHVDQLIRPALAEGRIVLCDRFIDSSRAYQGVTGNLDATYMAAIERIAIDGAMPDLTLVLDICAERGLSRAGKRRGSDTADRFEKEDIAVHEARRQAFLEIARQEPARCKLIDADRSQEKIADEIRSVVDTILTEKGLL.

Residue 10–17 (GGEGAGKS) participates in ATP binding.

This sequence belongs to the thymidylate kinase family.

It catalyses the reaction dTMP + ATP = dTDP + ADP. Phosphorylation of dTMP to form dTDP in both de novo and salvage pathways of dTTP synthesis. The sequence is that of Thymidylate kinase from Brucella suis (strain ATCC 23445 / NCTC 10510).